The primary structure comprises 205 residues: Small ribosomal subunit protein uS4 (205 aa).

Residues 19-45 are disordered; sequence IWGRPKSPVNRREYGPGQHGQRRKGKL. An S4 RNA-binding domain is found at 94-157; that stretch reads RRLDAVVYRA…KQLAFVLEAS (64 aa).

As to quaternary structure, part of the 30S ribosomal subunit. Contacts protein S5. The interaction surface between S4 and S5 is involved in control of translational fidelity. Post-translationally, may be methylated on an undetermined residue.

Functionally, one of the primary rRNA binding proteins, it binds directly to 16S rRNA where it nucleates assembly of the body of the 30S subunit. With S5 and S12 plays an important role in translational accuracy. In Rhodopseudomonas palustris (strain ATCC BAA-98 / CGA009), this protein is Small ribosomal subunit protein uS4.